The following is a 348-amino-acid chain: Dihydroorotase (348 aa).

Zn(2+) is bound by residues His-17 and His-19. Residues 19 to 21 (HLR) and Asn-45 each bind substrate. Zn(2+) contacts are provided by Lys-103, His-140, and His-178. Lys-103 bears the N6-carboxylysine mark. His-140 provides a ligand contact to substrate. Leu-223 lines the substrate pocket. Residue Asp-251 coordinates Zn(2+). Residue Asp-251 is part of the active site. 2 residues coordinate substrate: His-255 and Ala-267.

The protein belongs to the metallo-dependent hydrolases superfamily. DHOase family. Class II DHOase subfamily. As to quaternary structure, homodimer. Zn(2+) serves as cofactor.

The enzyme catalyses (S)-dihydroorotate + H2O = N-carbamoyl-L-aspartate + H(+). The protein operates within pyrimidine metabolism; UMP biosynthesis via de novo pathway; (S)-dihydroorotate from bicarbonate: step 3/3. Its function is as follows. Catalyzes the reversible cyclization of carbamoyl aspartate to dihydroorotate. The chain is Dihydroorotase from Yersinia pseudotuberculosis serotype I (strain IP32953).